Here is an 87-residue protein sequence, read N- to C-terminus: Small ribosomal subunit protein uS17 (87 aa).

It belongs to the universal ribosomal protein uS17 family. In terms of assembly, part of the 30S ribosomal subunit.

In terms of biological role, one of the primary rRNA binding proteins, it binds specifically to the 5'-end of 16S ribosomal RNA. This Staphylococcus carnosus (strain TM300) protein is Small ribosomal subunit protein uS17.